Reading from the N-terminus, the 138-residue chain is Putative pre-16S rRNA nuclease (138 aa).

The protein belongs to the YqgF nuclease family.

It is found in the cytoplasm. Functionally, could be a nuclease involved in processing of the 5'-end of pre-16S rRNA. This is Putative pre-16S rRNA nuclease from Salmonella typhimurium (strain LT2 / SGSC1412 / ATCC 700720).